The chain runs to 285 residues: MALERLFRRKRPSGGNRDVPELWTKCEACGAQIYKKEFQENLHVCPKCGHHHRLPARERVAMLADPGTFQEITRLRPLDPLGFVDTKPYVERLKAYQAETGRPDAILGGTCQIGGVPAVLLVMDYAFAGGSMGSVVGEEIARGAERAAEEGRALVIVAASGGARMQEAALSLMQMAKTVMSLDRVWARRLPYVSVLTDPTTGGVTASFAALADVIFAEPGALIGFAGPRVIRQTIRQELPEGFQRSEFLLKHGMVDRVTDRRRLKEELVRVLRHLHPGVAYAPGV.

A CoA carboxyltransferase N-terminal domain is found at 22–285 (LWTKCEACGA…HPGVAYAPGV (264 aa)). Zn(2+)-binding residues include cysteine 26, cysteine 29, cysteine 45, and cysteine 48. The C4-type zinc-finger motif lies at 26 to 48 (CEACGAQIYKKEFQENLHVCPKC).

The protein belongs to the AccD/PCCB family. Acetyl-CoA carboxylase is a heterohexamer composed of biotin carboxyl carrier protein (AccB), biotin carboxylase (AccC) and two subunits each of ACCase subunit alpha (AccA) and ACCase subunit beta (AccD). Zn(2+) is required as a cofactor.

It is found in the cytoplasm. It carries out the reaction N(6)-carboxybiotinyl-L-lysyl-[protein] + acetyl-CoA = N(6)-biotinyl-L-lysyl-[protein] + malonyl-CoA. The protein operates within lipid metabolism; malonyl-CoA biosynthesis; malonyl-CoA from acetyl-CoA: step 1/1. Component of the acetyl coenzyme A carboxylase (ACC) complex. Biotin carboxylase (BC) catalyzes the carboxylation of biotin on its carrier protein (BCCP) and then the CO(2) group is transferred by the transcarboxylase to acetyl-CoA to form malonyl-CoA. This is Acetyl-coenzyme A carboxylase carboxyl transferase subunit beta from Thermus thermophilus (strain ATCC 27634 / DSM 579 / HB8).